A 162-amino-acid chain; its full sequence is Transcription elongation factor GreA (162 aa).

Positions 1-28 form a coiled coil; it reads MQKEPMLEETYRKLSEELEQLKSVERGV.

Belongs to the GreA/GreB family.

Functionally, necessary for efficient RNA polymerase transcription elongation past template-encoded arresting sites. The arresting sites in DNA have the property of trapping a certain fraction of elongating RNA polymerases that pass through, resulting in locked ternary complexes. Cleavage of the nascent transcript by cleavage factors such as GreA or GreB allows the resumption of elongation from the new 3'terminus. GreA releases sequences of 2 to 3 nucleotides. The polypeptide is Transcription elongation factor GreA (Sulfurovum sp. (strain NBC37-1)).